The following is a 421-amino-acid chain: Medium-chain specific acyl-CoA dehydrogenase, mitochondrial (421 aa).

The transit peptide at 1 to 25 (MAAMFRRSCRVLRSLSHFGWRSQHT) directs the protein to the mitochondrion. Lys79 carries the post-translational modification N6-acetyllysine. 158–167 (YCVTEPGAGS) provides a ligand contact to FAD. Ser167 serves as a coordination point for octanoyl-CoA. The residue at position 179 (Lys179) is an N6-succinyllysine. Residue 191–193 (WIT) coordinates FAD. Residue Lys212 is modified to N6-acetyllysine; alternate. The residue at position 212 (Lys212) is an N6-succinyllysine; alternate. Ser216 is a binding site for octanoyl-CoA. Lys217, Lys259, and Lys271 each carry N6-acetyllysine; alternate. 3 positions are modified to N6-succinyllysine; alternate: Lys217, Lys259, and Lys271. Asp278 lines the octanoyl-CoA pocket. The residue at position 279 (Lys279) is an N6-acetyllysine. Residue Arg281 coordinates octanoyl-CoA. Position 301 is an N6-acetyllysine (Lys301). Residues 306–308 (RKT) and 316–317 (HQ) contribute to the FAD site. Arg349 and Thr351 together coordinate octanoyl-CoA. Thr351 bears the Phosphothreonine mark. FAD is bound at residue 374–378 (QVFGG). Glu401 lines the octanoyl-CoA pocket. The Proton acceptor role is filled by Glu401. 402-405 (GTAQ) provides a ligand contact to FAD.

The protein belongs to the acyl-CoA dehydrogenase family. In terms of assembly, homotetramer. Interacts with the heterodimeric electron transfer flavoprotein ETF. FAD is required as a cofactor. Post-translationally, acetylated. Could occur at proximity of the cofactor-binding sites and reduce the catalytic activity. Could be deacetylated by SIRT3.

Its subcellular location is the mitochondrion matrix. The catalysed reaction is a medium-chain 2,3-saturated fatty acyl-CoA + oxidized [electron-transfer flavoprotein] + H(+) = a medium-chain (2E)-enoyl-CoA + reduced [electron-transfer flavoprotein]. The enzyme catalyses pentanoyl-CoA + oxidized [electron-transfer flavoprotein] + H(+) = (2E)-pentenoyl-CoA + reduced [electron-transfer flavoprotein]. It catalyses the reaction hexanoyl-CoA + oxidized [electron-transfer flavoprotein] + H(+) = (2E)-hexenoyl-CoA + reduced [electron-transfer flavoprotein]. It carries out the reaction octanoyl-CoA + oxidized [electron-transfer flavoprotein] + H(+) = (2E)-octenoyl-CoA + reduced [electron-transfer flavoprotein]. The catalysed reaction is decanoyl-CoA + oxidized [electron-transfer flavoprotein] + H(+) = (2E)-decenoyl-CoA + reduced [electron-transfer flavoprotein]. The enzyme catalyses dodecanoyl-CoA + oxidized [electron-transfer flavoprotein] + H(+) = (2E)-dodecenoyl-CoA + reduced [electron-transfer flavoprotein]. It catalyses the reaction tetradecanoyl-CoA + oxidized [electron-transfer flavoprotein] + H(+) = (2E)-tetradecenoyl-CoA + reduced [electron-transfer flavoprotein]. It carries out the reaction oxidized [electron-transfer flavoprotein] + hexadecanoyl-CoA + H(+) = (2E)-hexadecenoyl-CoA + reduced [electron-transfer flavoprotein]. It participates in lipid metabolism; mitochondrial fatty acid beta-oxidation. Functionally, medium-chain specific acyl-CoA dehydrogenase is one of the acyl-CoA dehydrogenases that catalyze the first step of mitochondrial fatty acid beta-oxidation, an aerobic process breaking down fatty acids into acetyl-CoA and allowing the production of energy from fats. The first step of fatty acid beta-oxidation consists in the removal of one hydrogen from C-2 and C-3 of the straight-chain fatty acyl-CoA thioester, resulting in the formation of trans-2-enoyl-CoA. Electron transfer flavoprotein (ETF) is the electron acceptor that transfers electrons to the main mitochondrial respiratory chain via ETF-ubiquinone oxidoreductase (ETF dehydrogenase). Among the different mitochondrial acyl-CoA dehydrogenases, medium-chain specific acyl-CoA dehydrogenase acts specifically on acyl-CoAs with saturated 6 to 12 carbons long primary chains. The chain is Medium-chain specific acyl-CoA dehydrogenase, mitochondrial from Sus scrofa (Pig).